A 175-amino-acid chain; its full sequence is uncharacterized protein (175 aa).

The protein belongs to the asfivirus B175L family.

This is an uncharacterized protein from African swine fever virus (strain Badajoz 1971 Vero-adapted) (Ba71V).